A 569-amino-acid chain; its full sequence is Rab GTPase-binding effector protein 2 (569 aa).

3 disordered regions span residues Met-1–Ser-41, Ile-180–Ser-265, and Arg-388–Pro-411. Ala-2 carries the N-acetylalanine modification. A coiled-coil region spans residues Glu-34–Ala-187. Residues Ser-189 and Ser-193 each carry the phosphoserine modification. A Phosphoserine; by GSK3-alpha modification is found at Ser-200. Ser-204 bears the Phosphoserine mark. Low complexity-rich tracts occupy residues Ser-245–Ser-257 and Pro-393–Glu-403. Residues Asp-289–Gln-523 adopt a coiled-coil conformation.

The protein belongs to the rabaptin family. Heterodimer with RABGEF1. The dimer binds RAB5A that has been activated by GTP-binding. Interacts with SDCCAG8; this interaction is important for ciliogenesis regulation. Interacts with RAB4A; this interaction may mediate VEGFR2 cell surface expression.

Its subcellular location is the cytoplasm. The protein localises to the early endosome. It localises to the cytoskeleton. The protein resides in the microtubule organizing center. It is found in the centrosome. Its subcellular location is the cilium basal body. In terms of biological role, plays a role in membrane trafficking and in homotypic early endosome fusion. Participates in arteriogenesis by regulating vascular endothelial growth factor receptor 2/VEGFR2 cell surface expression and endosomal trafficking. By interacting with SDCCAG8, localizes to centrosomes and plays a critical role in ciliogenesis. The chain is Rab GTPase-binding effector protein 2 (RABEP2) from Homo sapiens (Human).